Reading from the N-terminus, the 213-residue chain is Small ribosomal subunit protein eS1 (213 aa).

The disordered stretch occupies residues 189 to 213 (ARPEEVAAEEETAVDVDEEDVDVEA). Residues 194 to 213 (VAAEEETAVDVDEEDVDVEA) are compositionally biased toward acidic residues.

It belongs to the eukaryotic ribosomal protein eS1 family.

This is Small ribosomal subunit protein eS1 from Haloarcula marismortui (strain ATCC 43049 / DSM 3752 / JCM 8966 / VKM B-1809) (Halobacterium marismortui).